The sequence spans 605 residues: DNA primase (605 aa).

The CHC2-type zinc finger occupies 38–62 (CPFHDEKTPSFTVSEDKQICHCFGC). The 82-residue stretch at 260 to 341 (DEIVLLEGFM…NVFVIQLPSG (82 aa)) folds into the Toprim domain. Mg(2+) contacts are provided by E266, D310, and D312.

It belongs to the DnaG primase family. Monomer. Interacts with DnaB. It depends on Zn(2+) as a cofactor. The cofactor is Mg(2+).

It catalyses the reaction ssDNA + n NTP = ssDNA/pppN(pN)n-1 hybrid + (n-1) diphosphate.. In terms of biological role, RNA polymerase that catalyzes the synthesis of short RNA molecules used as primers for DNA polymerase during DNA replication. This Staphylococcus aureus (strain Mu50 / ATCC 700699) protein is DNA primase.